A 561-amino-acid polypeptide reads, in one-letter code: Potassium-transporting ATPase potassium-binding subunit (561 aa).

12 helical membrane passes run 5–25 (LAAGLQVVFVLAVLAVAYVPV), 60–80 (YGYAGSVLGFSAASVLFLYAL), 86–106 (VLPLSGDLSGVSPAVAFNTAV), 131–151 (GLAVQNFVSAAVGMAVAVALI), 177–197 (ILLPFSFVIALILLSQGVIQS), 247–267 (PTPVSNIVEILAILLIPVSLT), 281–301 (LTLLAVMGILWGSLLAVTLAA), 324–344 (FGIPGTALFAVSTTGTSTGAV), 376–396 (GLYGILVLALIAVFVGGLLVG), 415–435 (ALSVLVMPALVLIGTGITVIL), 488–508 (ALGLCMLFGRFLPIIFVLALA), and 537–557 (GTVVLVAALTFFPALALGPIA).

It belongs to the KdpA family. The system is composed of three essential subunits: KdpA, KdpB and KdpC.

Its subcellular location is the cell membrane. Part of the high-affinity ATP-driven potassium transport (or Kdp) system, which catalyzes the hydrolysis of ATP coupled with the electrogenic transport of potassium into the cytoplasm. This subunit binds the extracellular potassium ions and delivers the ions to the membrane domain of KdpB through an intramembrane tunnel. This Rhodococcus opacus (strain B4) protein is Potassium-transporting ATPase potassium-binding subunit.